The chain runs to 225 residues: MMYHIPGVLSPQDVARFREHLEQAEWVDGRVTTGAQGAQVKNNQQVDTRSALYAALQNEVLNAVNQHALFFAAALPRTLSTPLFNRYQNNETYGFHVDGAVRSHPQNGWMRTDLSATLFLSDPESYDGGELVVNDTFGQHRVKLPAGDLVLYPSSSLHCVTPVTRGVRVASFMWIQSMIRDDKKRAMLFELDNNIQSLKSHYGESEEILSLLNLYHNLLREWSEI.

Residues 78-177 form the Fe2OG dioxygenase domain; the sequence is TLSTPLFNRY…RVASFMWIQS (100 aa). The Fe cation site is built by His96, Asp98, and His158. Arg168 serves as a coordination point for 2-oxoglutarate.

The cofactor is Fe(2+). L-ascorbate serves as cofactor.

The sequence is that of PKHD-type hydroxylase YbiX from Escherichia coli O6:H1 (strain CFT073 / ATCC 700928 / UPEC).